The following is a 193-amino-acid chain: ATP-dependent Clp protease proteolytic subunit 1 (193 aa).

Catalysis depends on Ser-98, which acts as the Nucleophile. Residue His-123 is part of the active site.

It belongs to the peptidase S14 family. As to quaternary structure, fourteen ClpP subunits assemble into 2 heptameric rings which stack back to back to give a disk-like structure with a central cavity, resembling the structure of eukaryotic proteasomes.

The protein resides in the cytoplasm. The enzyme catalyses Hydrolysis of proteins to small peptides in the presence of ATP and magnesium. alpha-casein is the usual test substrate. In the absence of ATP, only oligopeptides shorter than five residues are hydrolyzed (such as succinyl-Leu-Tyr-|-NHMec, and Leu-Tyr-Leu-|-Tyr-Trp, in which cleavage of the -Tyr-|-Leu- and -Tyr-|-Trp bonds also occurs).. Its function is as follows. Cleaves peptides in various proteins in a process that requires ATP hydrolysis. Has a chymotrypsin-like activity. Plays a major role in the degradation of misfolded proteins. This is ATP-dependent Clp protease proteolytic subunit 1 from Bacillus cereus (strain ZK / E33L).